Reading from the N-terminus, the 307-residue chain is UDP-3-O-acyl-N-acetylglucosamine deacetylase (307 aa).

Residues H78, H241, and D245 each contribute to the Zn(2+) site. The Proton donor role is filled by H268.

Belongs to the LpxC family. Requires Zn(2+) as cofactor.

The enzyme catalyses a UDP-3-O-[(3R)-3-hydroxyacyl]-N-acetyl-alpha-D-glucosamine + H2O = a UDP-3-O-[(3R)-3-hydroxyacyl]-alpha-D-glucosamine + acetate. Its pathway is glycolipid biosynthesis; lipid IV(A) biosynthesis; lipid IV(A) from (3R)-3-hydroxytetradecanoyl-[acyl-carrier-protein] and UDP-N-acetyl-alpha-D-glucosamine: step 2/6. In terms of biological role, catalyzes the hydrolysis of UDP-3-O-myristoyl-N-acetylglucosamine to form UDP-3-O-myristoylglucosamine and acetate, the committed step in lipid A biosynthesis. The chain is UDP-3-O-acyl-N-acetylglucosamine deacetylase from Polaromonas sp. (strain JS666 / ATCC BAA-500).